Reading from the N-terminus, the 140-residue chain is ATP synthase epsilon chain (140 aa).

The protein belongs to the ATPase epsilon chain family. In terms of assembly, F-type ATPases have 2 components, CF(1) - the catalytic core - and CF(0) - the membrane proton channel. CF(1) has five subunits: alpha(3), beta(3), gamma(1), delta(1), epsilon(1). CF(0) has three main subunits: a, b and c.

The protein resides in the cell inner membrane. Produces ATP from ADP in the presence of a proton gradient across the membrane. The chain is ATP synthase epsilon chain from Bordetella bronchiseptica (strain ATCC BAA-588 / NCTC 13252 / RB50) (Alcaligenes bronchisepticus).